Here is a 237-residue protein sequence, read N- to C-terminus: N-alpha-acetyltransferase 40 (237 aa).

A lipid anchor (N-myristoyl glycine) is attached at G2. One can recognise an N-acetyltransferase domain in the interval 63-216 (SGLEPATVDW…EDCSYEILSR (154 aa)). Substrate is bound by residues Y85, 127-129 (DVE), and Y138. Acetyl-CoA contacts are provided by residues 140 to 142 (VQL) and 148 to 153 (RKGLGK). Residue T174 coordinates substrate. An acetyl-CoA-binding site is contributed by N179. Substrate is bound by residues S197 and Y211.

This sequence belongs to the acetyltransferase family. NAA40 subfamily. Widely expressed; with the highest expression level in liver and the lowest expression in brain (at protein level).

The protein localises to the cytoplasm. It is found in the nucleus. The enzyme catalyses N-terminal L-seryl-[histone H4] + acetyl-CoA = N-terminal N(alpha)-acetyl-L-seryl-[histone H4] + CoA + H(+). It carries out the reaction N-terminal L-seryl-[histone H2A] + acetyl-CoA = N-terminal N(alpha)-acetyl-L-seryl-[histone H2A] + CoA + H(+). Its function is as follows. N-alpha-acetyltransferase that specifically mediates the acetylation of the N-terminal residues of histones H4 and H2A. In contrast to other N-alpha-acetyltransferase, has a very specific selectivity for histones H4 and H2A N-terminus and specifically recognizes the 'Ser-Gly-Arg-Gly sequence'. Acts as a negative regulator of apoptosis. May play a role in hepatic lipid metabolism. This chain is N-alpha-acetyltransferase 40, found in Homo sapiens (Human).